The primary structure comprises 401 residues: Ribosomal RNA large subunit methyltransferase G (401 aa).

It belongs to the methyltransferase superfamily. RlmG family.

The protein resides in the cytoplasm. It carries out the reaction guanosine(1835) in 23S rRNA + S-adenosyl-L-methionine = N(2)-methylguanosine(1835) in 23S rRNA + S-adenosyl-L-homocysteine + H(+). Functionally, specifically methylates the guanine in position 1835 (m2G1835) of 23S rRNA. The protein is Ribosomal RNA large subunit methyltransferase G of Shewanella loihica (strain ATCC BAA-1088 / PV-4).